Reading from the N-terminus, the 191-residue chain is Molybdenum cofactor guanylyltransferase (191 aa).

GTP is bound by residues 11–13 (LCG), Lys-23, Asp-66, and Asp-97. Residue Asp-97 participates in Mg(2+) binding.

It belongs to the MobA family. Monomer. Mg(2+) serves as cofactor.

It is found in the cytoplasm. It catalyses the reaction Mo-molybdopterin + GTP + H(+) = Mo-molybdopterin guanine dinucleotide + diphosphate. Transfers a GMP moiety from GTP to Mo-molybdopterin (Mo-MPT) cofactor (Moco or molybdenum cofactor) to form Mo-molybdopterin guanine dinucleotide (Mo-MGD) cofactor. The chain is Molybdenum cofactor guanylyltransferase from Campylobacter jejuni subsp. doylei (strain ATCC BAA-1458 / RM4099 / 269.97).